A 436-amino-acid polypeptide reads, in one-letter code: Antilisterial bacteriocin subtilosin biosynthesis protein AlbD (436 aa).

The next 10 membrane-spanning stretches (helical) occupy residues 27–47 (IAAG…QAGI), 55–75 (TYII…SVTS), 113–133 (LFFF…GAQT), 134–154 (LFWL…GVVL), 164–184 (LMFL…ALMP), 187–207 (TIPL…PVFL), 240–260 (AMLL…FQMM), 270–290 (IYIV…LYSI), 315–335 (FYSG…GFIS), and 395–415 (AILA…LVIV).

It localises to the cell membrane. Its function is as follows. Involved in the production of the bacteriocin subtilosin. Required for immunity to subtilosin. The polypeptide is Antilisterial bacteriocin subtilosin biosynthesis protein AlbD (albD) (Bacillus subtilis (strain 168)).